Here is a 147-residue protein sequence, read N- to C-terminus: Testis-expressed protein 29 (147 aa).

At 1-57 the chain is on the extracellular side; it reads MRYAPEFKKSPSHLLKKFAVCDIPLYDICDYNVSRDRCKELGCCFYKGICYEKAVPS. Residues 58–78 traverse the membrane as a helical segment; the sequence is YVQVFSALIVIIAGAFVITII. Residues 79–147 are Cytoplasmic-facing; sequence YRVIQESRRE…IVTEEEETED (69 aa). Residues 86-147 form a disordered region; that stretch reads RREKEVPTEA…IVTEEEETED (62 aa). Polar residues predominate over residues 99-108; the sequence is AKSSVQVETQ. Low complexity predominate over residues 109–120; it reads PPSSAGAGSKAP. The segment covering 125–135 has biased composition (basic and acidic residues); that stretch reads PQSKESGREDA.

It localises to the membrane. The polypeptide is Testis-expressed protein 29 (TEX29) (Bos taurus (Bovine)).